The sequence spans 286 residues: Pyridoxal kinase PdxY (286 aa).

Substrate-binding positions include S9 and 44–45 (TQ). Residues D111, A143, E148, K181, and 208–211 (RPLV) contribute to the ATP site. D223 is a binding site for substrate.

This sequence belongs to the pyridoxine kinase family. PdxY subfamily. As to quaternary structure, homodimer. The cofactor is Mg(2+).

It carries out the reaction pyridoxal + ATP = pyridoxal 5'-phosphate + ADP + H(+). Its pathway is cofactor metabolism; pyridoxal 5'-phosphate salvage; pyridoxal 5'-phosphate from pyridoxal: step 1/1. Its function is as follows. Pyridoxal kinase involved in the salvage pathway of pyridoxal 5'-phosphate (PLP). Catalyzes the phosphorylation of pyridoxal to PLP. The chain is Pyridoxal kinase PdxY from Yersinia pestis bv. Antiqua (strain Antiqua).